We begin with the raw amino-acid sequence, 282 residues long: MIPWNAYVRLLRLNKPIGILLLWYPTAWALWMANQGFPSIDLLMIFLLGTVFMRSAGCVINDIADRHIDRHVARTQFRPLTAGEVSLSEAFILLFILLCASLLLLLKLPINCFYFAVISVLITFLYPFCKRFLNAPQLILGLAFSMGIPMAFIASGKNLNSDFIVLFLINFSWIIAYDTMYAMTDKADDLKIGVKSTAIYFASYDRLIIALLLIFLHSLWLVWAINKNAEWFFYLLWCTAAGILTYQLKLIYARIPKNCFKAFLVSGYYGLVMWFAVGLALI.

9 helical membrane passes run Ile17–Phe37, Ile40–Ile60, Ala90–Ile110, Phe113–Leu133, Ala135–Ser155, Phe163–Met183, Leu207–Lys227, Trp231–Ile251, and Ala262–Ile282.

Belongs to the UbiA prenyltransferase family. It depends on Mg(2+) as a cofactor.

It is found in the cell inner membrane. The catalysed reaction is all-trans-octaprenyl diphosphate + 4-hydroxybenzoate = 4-hydroxy-3-(all-trans-octaprenyl)benzoate + diphosphate. The protein operates within cofactor biosynthesis; ubiquinone biosynthesis. In terms of biological role, catalyzes the prenylation of para-hydroxybenzoate (PHB) with an all-trans polyprenyl group. Mediates the second step in the final reaction sequence of ubiquinone-8 (UQ-8) biosynthesis, which is the condensation of the polyisoprenoid side chain with PHB, generating the first membrane-bound Q intermediate 3-octaprenyl-4-hydroxybenzoate. This chain is 4-hydroxybenzoate octaprenyltransferase, found in Legionella pneumophila subsp. pneumophila (strain Philadelphia 1 / ATCC 33152 / DSM 7513).